The primary structure comprises 176 residues: Large ribosomal subunit protein bL28m (176 aa).

The transit peptide at 1 to 8 (MASKLLRK) directs the protein to the mitochondrion.

Belongs to the bacterial ribosomal protein bL28 family. In terms of assembly, component of the mitochondrial large ribosomal subunit (mt-LSU). Mature yeast 74S mitochondrial ribosomes consist of a small (37S) and a large (54S) subunit. The 37S small subunit contains a 15S ribosomal RNA (15S mt-rRNA) and at least 32 different proteins. The 54S large subunit contains a 21S rRNA (21S mt-rRNA) and at least 45 different proteins.

It is found in the cytoplasm. The protein localises to the mitochondrion. Functionally, component of the mitochondrial ribosome (mitoribosome), a dedicated translation machinery responsible for the synthesis of mitochondrial genome-encoded proteins, including at least some of the essential transmembrane subunits of the mitochondrial respiratory chain. The mitoribosomes are attached to the mitochondrial inner membrane and translation products are cotranslationally integrated into the membrane. The sequence is that of Large ribosomal subunit protein bL28m (mrpl24) from Schizosaccharomyces pombe (strain 972 / ATCC 24843) (Fission yeast).